Consider the following 423-residue polypeptide: MADRSERSGVEILCVGTELLLGNILNGNARWLSEELATLGLPHFRQTVVGDNRDRLIALVQEIAQRSRVLIVTGGLGPTPDDLTTEAIAAAFSVPLEERVDVWSDIQEKARSRGRTPSPETRRQALLPVGAEVLWNPTGTAPGMIWTPVPGFSVLTFPGVPSEMKAMWKATAVPWFRSSGLSKGVFVSRLLHFWGIGESTLAEQVADLLEGVNPTVAPYAGRGEVKLRITACADVSSKAWVLVDQIEQELRQRTGNLCFGVDEDSLASVVLKRLGQTGQTLSVAESCTGGGLGAELTAVPGASSVMLGGVISYSNAVKRDLLSVPEDLLTQHGAVSAQVAEAMALGVRRLTGSDWALSITGIAGPDGGTPEKPVGLVFVGVAGPDGCSTEMLRLGPTRGREWIRIVSAGEVLNRLRLRLMVND.

The protein belongs to the CinA family.

This is CinA-like protein from Synechococcus sp. (strain CC9311).